A 701-amino-acid chain; its full sequence is Transcription factor PDR8 (701 aa).

A disordered region spans residues 1–22 (MDGSHFPMKSTTGEPVSSGKKG). Positions 31-59 (CAFCRKRKLKCSQARPMCQQCVIRKLPQC) form a DNA-binding region, zn(2)-C6 fungal-type.

It is found in the cytoplasm. The protein resides in the nucleus. Its function is as follows. Up-regulates the transcription of the genes for ATP-binding cassette (ABC) transporters YOR1 and PDR15, for major facilitator superfamily transporter AZR1, for pleiotropic drug resistance SNG1, for alpha-glucosidase YJL216C and for YLL056C. The chain is Transcription factor PDR8 (PDR8) from Saccharomyces cerevisiae (strain ATCC 204508 / S288c) (Baker's yeast).